The sequence spans 104 residues: Replication restart protein PriB (104 aa).

The SSB domain occupies 1–101 (MTNRLVLSGT…LHAEQIELID (101 aa)).

Belongs to the PriB family. As to quaternary structure, homodimer. Interacts with PriA and DnaT. Component of the replication restart primosome. Primosome assembly occurs via a 'hand-off' mechanism. PriA binds to replication forks, subsequently PriB then DnaT bind; DnaT then displaces ssDNA to generate the helicase loading substrate.

In terms of biological role, involved in the restart of stalled replication forks, which reloads the replicative helicase on sites other than the origin of replication; the PriA-PriB pathway is the major replication restart pathway. During primosome assembly it facilitates complex formation between PriA and DnaT on DNA; stabilizes PriA on DNA. Stimulates the DNA unwinding activity of PriA helicase. The protein is Replication restart protein PriB of Escherichia coli (strain ATCC 8739 / DSM 1576 / NBRC 3972 / NCIMB 8545 / WDCM 00012 / Crooks).